Consider the following 545-residue polypeptide: Membrane protein insertase YidC (545 aa).

The helical transmembrane segment at 8-28 threads the bilayer; the sequence is ILLATVLSVGILILWQVIFPK. Residues 31-69 are disordered; that stretch reads PPKPAPTPAAEVAKPAAPAAPAPGAAAPAVPAPPPDAPE. A compositionally biased stretch (low complexity) spans 38–59; the sequence is PAAEVAKPAAPAAPAPGAAAPA. 5 helical membrane passes run 325–345, 355–375, 421–441, 458–478, and 497–517; these read IDYG…LYVM, WGVA…PLTY, LGGC…YAAL, LTAH…SFVM, and FFPG…TLYI.

It belongs to the OXA1/ALB3/YidC family. Type 1 subfamily. As to quaternary structure, interacts with the Sec translocase complex via SecD. Specifically interacts with transmembrane segments of nascent integral membrane proteins during membrane integration.

It is found in the cell inner membrane. Its function is as follows. Required for the insertion and/or proper folding and/or complex formation of integral membrane proteins into the membrane. Involved in integration of membrane proteins that insert both dependently and independently of the Sec translocase complex, as well as at least some lipoproteins. Aids folding of multispanning membrane proteins. This is Membrane protein insertase YidC from Anaeromyxobacter dehalogenans (strain 2CP-C).